A 269-amino-acid polypeptide reads, in one-letter code: tRNA pseudouridine synthase A (269 aa).

Asp-51 acts as the Nucleophile in catalysis. Substrate is bound at residue Tyr-109.

It belongs to the tRNA pseudouridine synthase TruA family. In terms of assembly, homodimer.

The enzyme catalyses uridine(38/39/40) in tRNA = pseudouridine(38/39/40) in tRNA. Its function is as follows. Formation of pseudouridine at positions 38, 39 and 40 in the anticodon stem and loop of transfer RNAs. The protein is tRNA pseudouridine synthase A of Haemophilus influenzae (strain PittGG).